Reading from the N-terminus, the 117-residue chain is MDCTWRILLLVAAATGTHAEVQLVQSGAEVKKPGATVKISCKVSGYTFTDYYMHWVQQAPGKGLEWMGLVDPEDGETIYAEKFQGRVTITADTSTDTAYMELSSLRSEDTAVYYCAT.

The signal sequence occupies residues 1–19 (MDCTWRILLLVAAATGTHA). The segment at 20–44 (EVQLVQSGAEVKKPGATVKISCKVS) is framework-1. An Ig-like domain is found at 20-117 (EVQLVQSGAE…EDTAVYYCAT (98 aa)). A disulfide bridge connects residues C41 and C115. Positions 45–52 (GYTFTDYY) are complementarity-determining-1. Residues 53-69 (MHWVQQAPGKGLEWMGL) form a framework-2 region. Residues 70-77 (VDPEDGET) are complementarity-determining-2. Positions 78 to 115 (IYAEKFQGRVTITADTSTDTAYMELSSLRSEDTAVYYC) are framework-3. Residues 116-117 (AT) form a complementarity-determining-3 region.

As to quaternary structure, immunoglobulins are composed of two identical heavy chains and two identical light chains; disulfide-linked.

It is found in the secreted. Its subcellular location is the cell membrane. In terms of biological role, v region of the variable domain of immunoglobulin heavy chains that participates in the antigen recognition. Immunoglobulins, also known as antibodies, are membrane-bound or secreted glycoproteins produced by B lymphocytes. In the recognition phase of humoral immunity, the membrane-bound immunoglobulins serve as receptors which, upon binding of a specific antigen, trigger the clonal expansion and differentiation of B lymphocytes into immunoglobulins-secreting plasma cells. Secreted immunoglobulins mediate the effector phase of humoral immunity, which results in the elimination of bound antigens. The antigen binding site is formed by the variable domain of one heavy chain, together with that of its associated light chain. Thus, each immunoglobulin has two antigen binding sites with remarkable affinity for a particular antigen. The variable domains are assembled by a process called V-(D)-J rearrangement and can then be subjected to somatic hypermutations which, after exposure to antigen and selection, allow affinity maturation for a particular antigen. This is Immunoglobulin heavy variable 1-69-2 from Homo sapiens (Human).